The primary structure comprises 203 residues: MPRYLGPRFKKIRRLGALPGLTNKSPKAGSDLRKQPRSRKKSQYRIRLEEKQKLCFHYGLREYQLLNYVRIAAKAKGPTGQVLLQLLEMRLDNILFRLGMASTIPAARQLVNHRHILVNGRIVDRPSYRCKPRDIIMTKDNQKSRTLIQNSLGSSPQKELPNHLTLHPFQYKGLVNQIIDSKWVGLKINELLVVEYYSRQTKA.

The segment at 19 to 43 (PGLTNKSPKAGSDLRKQPRSRKKSQ) is disordered. An S4 RNA-binding domain is found at 89 to 152 (MRLDNILFRL…KSRTLIQNSL (64 aa)).

The protein belongs to the universal ribosomal protein uS4 family. As to quaternary structure, part of the 30S ribosomal subunit. Contacts protein S5. The interaction surface between S4 and S5 is involved in control of translational fidelity.

Its subcellular location is the plastid. It is found in the chloroplast. Its function is as follows. One of the primary rRNA binding proteins, it binds directly to 16S rRNA where it nucleates assembly of the body of the 30S subunit. In terms of biological role, with S5 and S12 plays an important role in translational accuracy. This is Small ribosomal subunit protein uS4c (rps4) from Jasminum nudiflorum (Winter jasmine).